The sequence spans 255 residues: Tabinhibitin 1 (255 aa).

The signal sequence occupies residues 1 to 23 (MTSILVSRFLIAALVLQYATSDA). An SCP domain is found at 67–211 (LSKINDVRDH…KARALLTCNF (145 aa)).

The protein belongs to the CRISP family. Expressed in salivary glands.

The protein localises to the secreted. In terms of biological role, inhibits platelet aggregation induced by all agonists tested. May act by competing with fibrinogen for binding to glycoprotein IIb/IIIa (ITGA2B/ITGB3). The sequence is that of Tabinhibitin 1 from Tabanus yao (Horsefly).